A 212-amino-acid polypeptide reads, in one-letter code: Large ribosomal subunit protein uL3 (212 aa).

Glutamine 152 is modified (N5-methylglutamine).

The protein belongs to the universal ribosomal protein uL3 family. Part of the 50S ribosomal subunit. Forms a cluster with proteins L14 and L19. In terms of processing, methylated by PrmB.

Functionally, one of the primary rRNA binding proteins, it binds directly near the 3'-end of the 23S rRNA, where it nucleates assembly of the 50S subunit. The sequence is that of Large ribosomal subunit protein uL3 from Marinomonas sp. (strain MWYL1).